Reading from the N-terminus, the 122-residue chain is Large ribosomal subunit protein uL22c (122 aa).

Belongs to the universal ribosomal protein uL22 family. In terms of assembly, part of the 50S ribosomal subunit.

Its subcellular location is the plastid. It is found in the chloroplast. In terms of biological role, this protein binds specifically to 23S rRNA. Functionally, the globular domain of the protein is located near the polypeptide exit tunnel on the outside of the subunit, while an extended beta-hairpin is found that lines the wall of the exit tunnel in the center of the 70S ribosome. The polypeptide is Large ribosomal subunit protein uL22c (rpl22) (Adiantum capillus-veneris (Maidenhair fern)).